The chain runs to 94 residues: Protein SpdA (94 aa).

A helical membrane pass occupies residues 41–68; the sequence is GPILLALVAAGGSVGVVMTLCLLLQTAA.

It is found in the cell membrane. In terms of biological role, involved in plasmid transfer. In Streptomyces lividans, this protein is Protein SpdA (spdA).